The sequence spans 387 residues: Cytochrome b (387 aa).

A run of 8 helical transmembrane segments spans residues 32 to 52 (FGFF…LLAM), 76 to 98 (WLLR…VHML), 113 to 133 (LWVS…LGYV), 179 to 199 (FFSL…LHII), 225 to 245 (FTIK…AFVF), 290 to 310 (LGVL…FLTI), 325 to 345 (LFWS…QPAA), and 353 to 373 (LYST…IYMV). Heme b contacts are provided by His82 and His96. Residues His183 and His197 each contribute to the heme b site.

Belongs to the cytochrome b family. The main subunits of complex b-c1 are: cytochrome b, cytochrome c1 and the Rieske protein. It depends on heme b as a cofactor.

The protein localises to the mitochondrion inner membrane. Component of the ubiquinol-cytochrome c reductase complex (complex III or cytochrome b-c1 complex) that is part of the mitochondrial respiratory chain. The b-c1 complex mediates electron transfer from ubiquinol to cytochrome c. Contributes to the generation of a proton gradient across the mitochondrial membrane that is then used for ATP synthesis. The polypeptide is Cytochrome b (cytB) (Dictyostelium citrinum (Slime mold)).